The sequence spans 391 residues: Glycerol-3-phosphate dehydrogenase [NAD(+)] (391 aa).

NAD(+) contacts are provided by residues 46–51 (GSGNWG), Phe-78, and Phe-134. Lys-157 lines the substrate pocket. NAD(+) is bound at residue Ala-190. The active-site Proton acceptor is Lys-250. NAD(+) contacts are provided by Arg-315 and Gln-344. 315-316 (RN) contributes to the substrate binding site.

This sequence belongs to the NAD-dependent glycerol-3-phosphate dehydrogenase family.

The catalysed reaction is sn-glycerol 3-phosphate + NAD(+) = dihydroxyacetone phosphate + NADH + H(+). The chain is Glycerol-3-phosphate dehydrogenase [NAD(+)] (GPD) from Candida tropicalis (Yeast).